The sequence spans 234 residues: Rhodanese-like domain-containing protein 9, chloroplastic (234 aa).

The transit peptide at 1 to 47 directs the protein to the chloroplast; it reads MAGIISPSPTALYFTSNVGGRRLKAVSWAGKSVSGNVIRRRSLRIAA. A Rhodanese domain is found at 62–185; that stretch reads AEEGYSVVDV…VKPGTFESVG (124 aa). Cysteine 145 acts as the Cysteine persulfide intermediate in catalysis. A helical membrane pass occupies residues 204-222; that stretch reads ISAVLGTVLVCAYLFIQFF.

The protein localises to the plastid. It localises to the chloroplast. Its subcellular location is the membrane. The sequence is that of Rhodanese-like domain-containing protein 9, chloroplastic (STR9) from Arabidopsis thaliana (Mouse-ear cress).